An 88-amino-acid polypeptide reads, in one-letter code: Small ribosomal subunit protein uS15 (88 aa).

The protein belongs to the universal ribosomal protein uS15 family. As to quaternary structure, part of the 30S ribosomal subunit. Forms a bridge to the 50S subunit in the 70S ribosome, contacting the 23S rRNA.

In terms of biological role, one of the primary rRNA binding proteins, it binds directly to 16S rRNA where it helps nucleate assembly of the platform of the 30S subunit by binding and bridging several RNA helices of the 16S rRNA. Its function is as follows. Forms an intersubunit bridge (bridge B4) with the 23S rRNA of the 50S subunit in the ribosome. This Pelobacter propionicus (strain DSM 2379 / NBRC 103807 / OttBd1) protein is Small ribosomal subunit protein uS15.